We begin with the raw amino-acid sequence, 483 residues long: FK506-binding protein 4 (483 aa).

2 disordered regions span residues 41 to 171 (TAEP…EEFV) and 208 to 371 (TGNY…LKKP). Over residues 68–93 (EEDDDEYLDIDGEDSEDDEESDDEEV) the composition is skewed to acidic residues. 2 stretches are compositionally biased toward basic and acidic residues: residues 108 to 121 (REAAIKKLLEATKE) and 130 to 150 (ADAKPNGKGKKDSKGKAKASE). 3 stretches are compositionally biased toward acidic residues: residues 151-167 (SDDEKSDEDDEEGEPNF), 216-233 (GQDEEDDEDEEDYSDEEY), and 241-256 (LESDSDYESDELDEID). 3 stretches are compositionally biased toward basic and acidic residues: residues 298-309 (LVAKDKKQAEKQ), 323-344 (ENKDVKKEGKSDKKVQFAKDLE), and 351-370 (AKDKLEKKEEKKDDKADLKK). The PPIase FKBP-type domain maps to 397-483 (GDRVSLRYIG…VFDIKLLEIK (87 aa)).

Belongs to the FKBP-type PPIase family. FKBP3/4 subfamily. Binds to histones H3 and H4.

The protein resides in the nucleus. The catalysed reaction is [protein]-peptidylproline (omega=180) = [protein]-peptidylproline (omega=0). Its function is as follows. PPIase that acts as a histone chaperone. Histone proline isomerase that increases the rate of cis-trans isomerization at prolines on the histone H3 N-terminal tail. Proline isomerization influences H3 methylation thereby regulating gene expression. The protein is FK506-binding protein 4 (FPR4) of Chaetomium thermophilum (strain DSM 1495 / CBS 144.50 / IMI 039719) (Thermochaetoides thermophila).